Here is a 253-residue protein sequence, read N- to C-terminus: Complement C1q subcomponent subunit B (253 aa).

The first 25 residues, Met1–Ala25, serve as a signal peptide directing secretion. Position 26 is a pyrrolidone carboxylic acid (Gln26). Residues Cys29–Gly112 enclose the Collagen-like domain. The interval Cys29–Tyr114 is disordered. 4-hydroxyproline is present on residues Pro33, Pro36, Pro39, Pro51, and Pro54. 5-hydroxylysine is present on residues Lys57 and Lys60. At Pro63 the chain carries 4-hydroxyproline. Positions Asp68–Asp77 are enriched in basic and acidic residues. Lys75 is modified (5-hydroxylysine). Low complexity predominate over residues Ala78–Lys96. A 4-hydroxyproline mark is found at Pro81 and Pro84. 5-hydroxylysine occurs at positions 90 and 96. 2 positions are modified to 4-hydroxyproline: Pro99 and Pro102. Lys108 is subject to 5-hydroxylysine. Residues Lys115–Val253 enclose the C1q domain. Cys179 and Cys198 are disulfide-bonded. The Ca(2+) site is built by Asp199, Tyr200, and Gln206.

In terms of assembly, core component of the complement C1 complex, a calcium-dependent complex composed of 1 molecule of the C1Q subcomplex, 2 molecules of C1R and 2 molecules of C1S. The C1Q subcomplex is composed 18 subunits: 3 chains of C1QA, C1QB, and C1QC trimerize to form 6 collagen-like triple helices connected to six globular ligand-recognition modules (C1q domain). Hydroxylated on lysine and proline residues. Hydroxylated lysine residues can be glycosylated. Human C1Q contains up to 68.3 hydroxylysine-galactosylglucose residues and up to 2.5 hydroxylysine-galactose per molecule. Total percentage hydroxylysine residues glycosylated is 86.4%. Highest levels in spleen, lung and brain. Weaker expression in kidney and liver. In the spleen, localized mainly to the red pulp, in cells mainly of monocyte-macrophage lineage. In white pulp, localized in specific dendritic cells such as those from the periarteriolar lymphatic sheath (PALS).

Its subcellular location is the secreted. It localises to the cell surface. With respect to regulation, the C1Q subcomplex is inhibited by sulfated molecules, such as triterpenoid sulfates, heparan sulfate, or chondroitin sulfates. Functionally, core component of the complement C1 complex, a multiprotein complex that initiates the classical pathway of the complement system, a cascade of proteins that leads to phagocytosis and breakdown of pathogens and signaling that strengthens the adaptive immune system. The classical complement pathway is initiated by the C1Q subcomplex of the C1 complex, which specifically binds IgG or IgM immunoglobulins complexed with antigens, forming antigen-antibody complexes on the surface of pathogens: C1QA, together with C1QB and C1QC, specifically recognizes and binds the Fc regions of IgG or IgM via its C1q domain. Immunoglobulin-binding activates the proenzyme C1R, which cleaves C1S, initiating the proteolytic cascade of the complement system. The C1Q subcomplex is activated by a hexamer of IgG complexed with antigens, while it is activated by a pentameric IgM. The C1Q subcomplex also recognizes and binds phosphatidylserine exposed on the surface of cells undergoing programmed cell death, possibly promoting activation of the complement system. The sequence is that of Complement C1q subcomponent subunit B from Rattus norvegicus (Rat).